Consider the following 502-residue polypeptide: Cytochrome P450 71B10 (502 aa).

A helical membrane pass occupies residues 1-21 (MTVLWFVSLILLISILLVAVK). Cys-443 contacts heme.

The protein belongs to the cytochrome P450 family. It depends on heme as a cofactor.

The protein resides in the membrane. The protein is Cytochrome P450 71B10 (CYP71B10) of Arabidopsis thaliana (Mouse-ear cress).